Consider the following 141-residue polypeptide: Large ribosomal subunit protein uL11 (141 aa).

This sequence belongs to the universal ribosomal protein uL11 family. In terms of assembly, part of the ribosomal stalk of the 50S ribosomal subunit. Interacts with L10 and the large rRNA to form the base of the stalk. L10 forms an elongated spine to which L12 dimers bind in a sequential fashion forming a multimeric L10(L12)X complex. Post-translationally, one or more lysine residues are methylated.

Its function is as follows. Forms part of the ribosomal stalk which helps the ribosome interact with GTP-bound translation factors. The polypeptide is Large ribosomal subunit protein uL11 (Streptococcus pneumoniae (strain Hungary19A-6)).